The following is a 550-amino-acid chain: Glucose-6-phosphate isomerase (550 aa).

Glu357 serves as the catalytic Proton donor. Catalysis depends on residues His388 and Lys516.

The protein belongs to the GPI family.

The protein resides in the cytoplasm. It catalyses the reaction alpha-D-glucose 6-phosphate = beta-D-fructose 6-phosphate. Its pathway is carbohydrate biosynthesis; gluconeogenesis. The protein operates within carbohydrate degradation; glycolysis; D-glyceraldehyde 3-phosphate and glycerone phosphate from D-glucose: step 2/4. Catalyzes the reversible isomerization of glucose-6-phosphate to fructose-6-phosphate. This Psychromonas ingrahamii (strain DSM 17664 / CCUG 51855 / 37) protein is Glucose-6-phosphate isomerase.